We begin with the raw amino-acid sequence, 349 residues long: MKLNVSFPATGAQKTFEVMDDHKLRHFYDKRMGAEITADHLGDEWKGYVFKIAGGNDKQGFPMKQGVLTNTRVRLLLKKGHSCYRPRRTGERKRKSVRGCIVDQNLSALALIVVKKGEKDIPGLTDTTVLRRLGPKRASNIRKLYNLTKEDDVRQYVVKRPLPEKDGKKPRTKAPKIQRLITPVVLQRKRHRLAIKKRRVESRKEAEAEYMKILHLRRRQERIRRRSRLSSMRDSRSSIGEERDKEKEKAAVKAAKKVAKKEAKKEVKKVTEAAKKADAKAAKAKVEPKKADKKSADSGKKATAGDKKEKKVEKKAAPAAAKKEAPKRKPEAAKGDASAAKKEKKQKKK.

A disordered region spans residues Arg224–Lys349. 2 stretches are compositionally biased toward basic and acidic residues: residues Ser231–Ala251 and Lys260–Lys334.

It belongs to the eukaryotic ribosomal protein eS6 family. Component of the small ribosomal subunit. Part of the small subunit (SSU) processome, composed of more than 70 proteins and the RNA chaperone small nucleolar RNA (snoRNA) U3. Post-translationally, ribosomal protein S6 is the major substrate of protein kinases in eukaryote ribosomes.

It localises to the cytoplasm. The protein resides in the nucleus. The protein localises to the nucleolus. Component of the 40S small ribosomal subunit. Plays an important role in controlling cell growth and proliferation through the selective translation of particular classes of mRNA. Part of the small subunit (SSU) processome, first precursor of the small eukaryotic ribosomal subunit. During the assembly of the SSU processome in the nucleolus, many ribosome biogenesis factors, an RNA chaperone and ribosomal proteins associate with the nascent pre-rRNA and work in concert to generate RNA folding, modifications, rearrangements and cleavage as well as targeted degradation of pre-ribosomal RNA by the RNA exosome. The chain is Small ribosomal subunit protein eS6 (RpS6) from Aedes albopictus (Asian tiger mosquito).